The primary structure comprises 78 residues: Large ribosomal subunit protein bL28 (78 aa).

The protein belongs to the bacterial ribosomal protein bL28 family.

The protein is Large ribosomal subunit protein bL28 of Prochlorococcus marinus (strain MIT 9215).